A 109-amino-acid chain; its full sequence is Nucleoid-associated protein CKO_02678 (109 aa).

The interval 89–109 is disordered; sequence KEKMASVSSGMQLPPGFKMPF.

This sequence belongs to the YbaB/EbfC family. In terms of assembly, homodimer.

It is found in the cytoplasm. The protein resides in the nucleoid. Its function is as follows. Binds to DNA and alters its conformation. May be involved in regulation of gene expression, nucleoid organization and DNA protection. The sequence is that of Nucleoid-associated protein CKO_02678 from Citrobacter koseri (strain ATCC BAA-895 / CDC 4225-83 / SGSC4696).